We begin with the raw amino-acid sequence, 158 residues long: Cyclic pyranopterin monophosphate synthase (158 aa).

Residues 75-77 (LCH) and 113-114 (ME) each bind substrate. Asp-128 is a catalytic residue.

Belongs to the MoaC family. Homohexamer; trimer of dimers.

The enzyme catalyses (8S)-3',8-cyclo-7,8-dihydroguanosine 5'-triphosphate = cyclic pyranopterin phosphate + diphosphate. The protein operates within cofactor biosynthesis; molybdopterin biosynthesis. Functionally, catalyzes the conversion of (8S)-3',8-cyclo-7,8-dihydroguanosine 5'-triphosphate to cyclic pyranopterin monophosphate (cPMP). The polypeptide is Cyclic pyranopterin monophosphate synthase (Acidiphilium cryptum (strain JF-5)).